Reading from the N-terminus, the 196-residue chain is Nucleoid occlusion factor SlmA (196 aa).

The 62-residue stretch at serine 7–leucine 68 folds into the HTH tetR-type domain. A DNA-binding region (H-T-H motif) is located at residues threonine 31–phenylalanine 50. Positions glutamate 65 to lysine 142 form a coiled coil.

This sequence belongs to the nucleoid occlusion factor SlmA family. In terms of assembly, homodimer. Interacts with FtsZ.

The protein resides in the cytoplasm. It is found in the nucleoid. Required for nucleoid occlusion (NO) phenomenon, which prevents Z-ring formation and cell division over the nucleoid. Acts as a DNA-associated cell division inhibitor that binds simultaneously chromosomal DNA and FtsZ, and disrupts the assembly of FtsZ polymers. SlmA-DNA-binding sequences (SBS) are dispersed on non-Ter regions of the chromosome, preventing FtsZ polymerization at these regions. The polypeptide is Nucleoid occlusion factor SlmA (Vibrio atlanticus (strain LGP32) (Vibrio splendidus (strain Mel32))).